The primary structure comprises 150 residues: Transcriptional regulator MraZ (150 aa).

SpoVT-AbrB domains lie at 7–58 (KEQH…EPEI) and 87–130 (LDSV…SPEK).

It belongs to the MraZ family. Forms oligomers.

Its subcellular location is the cytoplasm. It localises to the nucleoid. The polypeptide is Transcriptional regulator MraZ (Chlorobium phaeobacteroides (strain BS1)).